The chain runs to 419 residues: Histidine--tRNA ligase (419 aa).

This sequence belongs to the class-II aminoacyl-tRNA synthetase family. In terms of assembly, homodimer.

It localises to the cytoplasm. The enzyme catalyses tRNA(His) + L-histidine + ATP = L-histidyl-tRNA(His) + AMP + diphosphate + H(+). In Thermosipho melanesiensis (strain DSM 12029 / CIP 104789 / BI429), this protein is Histidine--tRNA ligase.